We begin with the raw amino-acid sequence, 435 residues long: Enolase (435 aa).

Glutamine 167 contributes to the (2R)-2-phosphoglycerate binding site. Glutamate 209 functions as the Proton donor in the catalytic mechanism. Residues aspartate 246, glutamate 292, and aspartate 319 each contribute to the Mg(2+) site. 4 residues coordinate (2R)-2-phosphoglycerate: lysine 344, arginine 373, serine 374, and lysine 395. Catalysis depends on lysine 344, which acts as the Proton acceptor.

The protein belongs to the enolase family. Requires Mg(2+) as cofactor.

It is found in the cytoplasm. The protein resides in the secreted. The protein localises to the cell surface. The catalysed reaction is (2R)-2-phosphoglycerate = phosphoenolpyruvate + H2O. The protein operates within carbohydrate degradation; glycolysis; pyruvate from D-glyceraldehyde 3-phosphate: step 4/5. Its function is as follows. Catalyzes the reversible conversion of 2-phosphoglycerate (2-PG) into phosphoenolpyruvate (PEP). It is essential for the degradation of carbohydrates via glycolysis. This is Enolase from Lachnospira eligens (strain ATCC 27750 / DSM 3376 / VPI C15-48 / C15-B4) (Eubacterium eligens).